The sequence spans 445 residues: 2-oxoisovalerate dehydrogenase subunit alpha, mitochondrial (445 aa).

A mitochondrion-targeting transit peptide spans 1–45 (MAVAIAAARVWRPNRGLSQAALLLLWRPGARGLARSHPHRQQQQF). Thiamine diphosphate is bound by residues Tyr158 and Arg159. Ser206 is a K(+) binding site. Ser207 serves as a coordination point for thiamine diphosphate. Positions 208, 211, and 212 each coordinate K(+). Glu238 is a Mg(2+) binding site. Thiamine diphosphate is bound by residues Gly239, Ala240, and Arg265. 2 residues coordinate Mg(2+): Asn267 and Tyr269. His336 provides a ligand contact to thiamine diphosphate. Ser337 is modified (phosphoserine; by BCKDK). Thr338 is subject to Phosphothreonine. A phosphoserine mark is found at Ser339 and Ser347. The residue at position 356 (Lys356) is an N6-acetyllysine; alternate. Residue Lys356 is modified to N6-succinyllysine; alternate. Lys380 carries the N6-succinyllysine modification.

This sequence belongs to the BCKDHA family. As to quaternary structure, heterotetramer of 2 alpha/BCKDHA and 2 beta chains/BCKDHB that forms the branched-chain alpha-keto acid decarboxylase (E1) component of the BCKD complex. The branched-chain alpha-ketoacid dehydrogenase is a large complex composed of three major building blocks E1, E2 and E3. It is organized around E2, a 24-meric cubic core composed of DBT, to which are associated 6 to 12 copies of E1, and approximately 6 copies of the dehydrogenase E3, a DLD dimer. Interacts with PPM1K. The cofactor is thiamine diphosphate. Mg(2+) is required as a cofactor. Post-translationally, phosphorylated at Ser-337 by BCKDK and dephosphorylated by protein phosphatase PPM1K.

The protein resides in the mitochondrion matrix. It carries out the reaction N(6)-[(R)-lipoyl]-L-lysyl-[protein] + 3-methyl-2-oxobutanoate + H(+) = N(6)-[(R)-S(8)-2-methylpropanoyldihydrolipoyl]-L-lysyl-[protein] + CO2. Functionally, together with BCKDHB forms the heterotetrameric E1 subunit of the mitochondrial branched-chain alpha-ketoacid dehydrogenase (BCKD) complex. The BCKD complex catalyzes the multi-step oxidative decarboxylation of alpha-ketoacids derived from the branched-chain amino-acids valine, leucine and isoleucine producing CO2 and acyl-CoA which is subsequently utilized to produce energy. The E1 subunit catalyzes the first step with the decarboxylation of the alpha-ketoacid forming an enzyme-product intermediate. A reductive acylation mediated by the lipoylamide cofactor of E2 extracts the acyl group from the E1 active site for the next step of the reaction. The sequence is that of 2-oxoisovalerate dehydrogenase subunit alpha, mitochondrial (BCKDHA) from Macaca fascicularis (Crab-eating macaque).